A 400-amino-acid chain; its full sequence is Probable vacuolar protease A (400 aa).

The N-terminal stretch at 1–18 is a signal peptide; it reads MKGSLLLAGATLLGCTSA. A propeptide spans 19–72 (activation peptide); that stretch reads KLHSLKLKKVSLKEQLEHADIDVQIKSLGQKYMGIRPEQHEQQMFKEQTPIEAE. In terms of domain architecture, Peptidase A1 spans 87–397; that stretch reads YFSEISIGTP…DLGKGTVGLA (311 aa). Residue Asp-105 is part of the active site. Cys-118 and Cys-123 are joined by a disulfide. A glycan (N-linked (GlcNAc...) asparagine) is linked at Asn-140. Asp-289 is a catalytic residue. Cysteines 323 and 356 form a disulfide. Asn-340 carries an N-linked (GlcNAc...) asparagine glycan.

This sequence belongs to the peptidase A1 family.

The protein resides in the vacuole lumen. It localises to the secreted. It catalyses the reaction Hydrolysis of proteins with broad specificity for peptide bonds. Cleaves -Leu-Leu-|-Val-Tyr- bond in a synthetic substrate. Does not act on esters of Tyr or Arg.. Vacuolar aspartic endopeptidase which is probably also secreted and contributes to virulence. In Trichophyton verrucosum (strain HKI 0517), this protein is Probable vacuolar protease A (PEP2).